The sequence spans 143 residues: Large ribosomal subunit protein uL13 (143 aa).

Belongs to the universal ribosomal protein uL13 family. Part of the 50S ribosomal subunit.

Functionally, this protein is one of the early assembly proteins of the 50S ribosomal subunit, although it is not seen to bind rRNA by itself. It is important during the early stages of 50S assembly. The sequence is that of Large ribosomal subunit protein uL13 from Variovorax paradoxus (strain S110).